The chain runs to 283 residues: Orotidine 5'-phosphate decarboxylase (283 aa).

Catalysis depends on K97, which acts as the Proton donor.

This sequence belongs to the OMP decarboxylase family. Type 2 subfamily.

The enzyme catalyses orotidine 5'-phosphate + H(+) = UMP + CO2. It functions in the pathway pyrimidine metabolism; UMP biosynthesis via de novo pathway; UMP from orotate: step 2/2. In Clostridium botulinum (strain Okra / Type B1), this protein is Orotidine 5'-phosphate decarboxylase.